A 148-amino-acid polypeptide reads, in one-letter code: Small ribosomal subunit protein eS6 (148 aa).

The protein belongs to the eukaryotic ribosomal protein eS6 family.

This chain is Small ribosomal subunit protein eS6, found in Pyrobaculum islandicum (strain DSM 4184 / JCM 9189 / GEO3).